A 1167-amino-acid chain; its full sequence is Melanoma receptor tyrosine-protein kinase (1167 aa).

The signal sequence occupies residues 1 to 25 (MEFLRGGAALLQLLLVLSISRCCST). The Extracellular segment spans residues 26–642 (DPDRKVCQGT…GCRGDIVSHS (617 aa)). Residues N114, N144, and N201 are each glycosylated (N-linked (GlcNAc...) asparagine). 11 cysteine pairs are disulfide-bonded: C195/C204, C199/C212, C220/C228, C224/C236, C237/C245, C241/C253, C256/C265, C269/C296, C300/C311, C315/C330, and C333/C337. N-linked (GlcNAc...) asparagine glycans are attached at residues N356, N365, N398, N417, and N501. 9 disulfides stabilise this stretch: C504–C513, C508–C521, C524–C533, C537–C553, C556–C569, C560–C577, C593–C615, C618–C626, and C622–C634. N576 carries an N-linked (GlcNAc...) asparagine glycan. Residue N621 is glycosylated (N-linked (GlcNAc...) asparagine). The helical transmembrane segment at 643-665 (SLAVGLVSGLLITVIVALLIVVL) threads the bilayer. Residues 666 to 1167 (LRRRRIKRKR…QGGALYTPVR (502 aa)) lie on the Cytoplasmic side of the membrane. The Protein kinase domain maps to 710 to 977 (FKKDRVLGSG…QMARDPSRYL (268 aa)). ATP contacts are provided by residues 716–724 (LGSGAFGTV) and K743. D835 functions as the Proton acceptor in the catalytic mechanism.

Belongs to the protein kinase superfamily. Tyr protein kinase family. EGF receptor subfamily.

It is found in the membrane. It carries out the reaction L-tyrosyl-[protein] + ATP = O-phospho-L-tyrosyl-[protein] + ADP + H(+). Its function is as follows. Probable receptor with tyrosine-protein kinase activity. The chain is Melanoma receptor tyrosine-protein kinase (xmrk) from Xiphophorus maculatus (Southern platyfish).